The primary structure comprises 355 residues: Oligopeptide transport ATP-binding protein AmiE (355 aa).

The region spanning 9–260 (LTARDIVVEF…PRHPYTWSLL (252 aa)) is the ABC transporter domain. 45–52 (GESGSGKS) is an ATP binding site.

It belongs to the ABC transporter superfamily.

The protein resides in the cell membrane. Functionally, part of the binding-protein-dependent transport system for oligopeptides. Probably responsible for energy coupling to the transport system. This chain is Oligopeptide transport ATP-binding protein AmiE (amiE), found in Streptococcus pneumoniae serotype 4 (strain ATCC BAA-334 / TIGR4).